We begin with the raw amino-acid sequence, 121 residues long: uncharacterized protein (121 aa).

The next 2 helical transmembrane spans lie at 26–46 (FIAL…ILVL) and 72–92 (AFLT…WLGL).

It is found in the membrane. This is an uncharacterized protein from Saccharomyces cerevisiae (strain ATCC 204508 / S288c) (Baker's yeast).